The following is a 98-amino-acid chain: Probable sodium channel toxin Ts27 (98 aa).

Residues M1–G22 form the signal peptide. 4 cysteine pairs are disulfide-bonded: C36–C88, C40–C63, C49–C68, and C53–C70.

It belongs to the long (4 C-C) scorpion toxin superfamily. Sodium channel inhibitor family. In terms of tissue distribution, expressed by the venom gland.

It is found in the secreted. Its function is as follows. Probable sodium channel toxin. The sequence is that of Probable sodium channel toxin Ts27 from Tityus serrulatus (Brazilian scorpion).